The sequence spans 362 residues: Class I histocompatibility antigen, Gogo-OKO alpha chain (362 aa).

The signal sequence occupies residues 1 to 24 (MAVVAPRTLLLLLSGTLALTRTWA). Residues 25–114 (GSHSMRYFYT…LRGYYNQSEG (90 aa)) are alpha-1. Topologically, residues 25–308 (GSHSMRYFYT…EPSSQPTIPI (284 aa)) are extracellular. Residue N110 is glycosylated (N-linked (GlcNAc...) asparagine). The segment at 115-206 (GSHTIQRMYG…ENGKETLQRT (92 aa)) is alpha-2. 2 disulfide bridges follow: C125-C188 and C227-C283. Positions 207–298 (DPPKTHMTHH…GLPKPLTLRW (92 aa)) are alpha-3. In terms of domain architecture, Ig-like C1-type spans 209 to 295 (PKTHMTHHPV…QHEGLPKPLT (87 aa)). The interval 299 to 308 (EPSSQPTIPI) is connecting peptide. A helical transmembrane segment spans residues 309–332 (VGIIAGLVLLGAVITGAVVAAMMW). At 333 to 362 (RKKSSGRKGGSYSQAASSDSAQGSDVSLTA) the chain is on the cytoplasmic side. Residues 337–362 (SGRKGGSYSQAASSDSAQGSDVSLTA) are disordered. The span at 342–362 (GSYSQAASSDSAQGSDVSLTA) shows a compositional bias: low complexity.

This sequence belongs to the MHC class I family. Heterodimer of an alpha chain and a beta chain (beta-2-microglobulin).

Its subcellular location is the membrane. Functionally, involved in the presentation of foreign antigens to the immune system. This chain is Class I histocompatibility antigen, Gogo-OKO alpha chain, found in Gorilla gorilla gorilla (Western lowland gorilla).